Reading from the N-terminus, the 68-residue chain is MAVQQNKVSKSRRNMRRAHDALVAANPNECGNCGELKRPHHVCAACGHYDDREVVAQADEIELDEDAA.

Belongs to the bacterial ribosomal protein bL32 family.

The protein is Large ribosomal subunit protein bL32 of Ruegeria pomeroyi (strain ATCC 700808 / DSM 15171 / DSS-3) (Silicibacter pomeroyi).